Consider the following 511-residue polypeptide: 2-isopropylmalate synthase (511 aa).

A Pyruvate carboxyltransferase domain is found at 6–269; it reads IIIFDTTLRD…YTDIKCENIF (264 aa). Mn(2+) contacts are provided by Asp-15, His-203, His-205, and Asn-239. A regulatory domain region spans residues 394–511; it reads VIEKLSVISG…SLKVEERKMA (118 aa).

The protein belongs to the alpha-IPM synthase/homocitrate synthase family. LeuA type 1 subfamily. In terms of assembly, homodimer. It depends on Mn(2+) as a cofactor.

The protein resides in the cytoplasm. The catalysed reaction is 3-methyl-2-oxobutanoate + acetyl-CoA + H2O = (2S)-2-isopropylmalate + CoA + H(+). It functions in the pathway amino-acid biosynthesis; L-leucine biosynthesis; L-leucine from 3-methyl-2-oxobutanoate: step 1/4. Catalyzes the condensation of the acetyl group of acetyl-CoA with 3-methyl-2-oxobutanoate (2-ketoisovalerate) to form 3-carboxy-3-hydroxy-4-methylpentanoate (2-isopropylmalate). The protein is 2-isopropylmalate synthase of Campylobacter jejuni (strain RM1221).